The primary structure comprises 334 residues: AA9 family lytic polysaccharide monooxygenase A (334 aa).

The signal sequence occupies residues 1 to 22 (MSPSFKSTAILGAVALAARVRA). Residues H23 and H108 each contribute to the Cu(2+) site. Cystine bridges form between C78–C200 and C119–C123. N160 is a glycosylation site (N-linked (GlcNAc...) asparagine). O2 is bound by residues H186 and Q195. A Cu(2+)-binding site is contributed by Y197. N208 carries an N-linked (GlcNAc...) asparagine glycan. Residues 244 to 304 (GPALYTGGSS…PSPSLPVEIP (61 aa)) are disordered. A compositionally biased stretch (low complexity) spans 249 to 265 (TGGSSPSPNPPTSTQSP).

The protein belongs to the polysaccharide monooxygenase AA9 family. Cu(2+) serves as cofactor.

Its subcellular location is the secreted. It catalyses the reaction [(1-&gt;4)-beta-D-glucosyl]n+m + reduced acceptor + O2 = 4-dehydro-beta-D-glucosyl-[(1-&gt;4)-beta-D-glucosyl]n-1 + [(1-&gt;4)-beta-D-glucosyl]m + acceptor + H2O.. Functionally, lytic polysaccharide monooxygenase (LPMO) that depolymerizes crystalline and amorphous polysaccharides via the oxidation of scissile alpha- or beta-(1-4)-glycosidic bonds, yielding C1 or C4 oxidation products. Catalysis by LPMOs requires the reduction of the active-site copper from Cu(II) to Cu(I) by a reducing agent and H(2)O(2) or O(2) as a cosubstrate. Active on hemicelluloses, including xylan, glucomannan, and xyloglucan. Shows clear activity on cellooligosaccharides, generating C4 oxidation products. Also displays activity on konjac glucomannan (KGM), a linear beta-1,4-linked mannan with randomly distributed glucosyl residues; as well as trace activity on lichenan, a linear beta-1,3-beta-1,4-glucan with a 1:2 ratio of beta-1,3 to beta-1,4 linkages. Has no activity on ivory nut mannan (INM), a linear beta-1,4-linked mannan without substitutions. The chain is AA9 family lytic polysaccharide monooxygenase A from Malbranchea cinnamomea (Thermophilic fungus).